A 305-amino-acid polypeptide reads, in one-letter code: tRNA dimethylallyltransferase 2 (305 aa).

14–21 (GPTASGKT) contacts ATP. 16–21 (TASGKT) provides a ligand contact to substrate. The segment at 39 to 42 (DSRQ) is interaction with substrate tRNA.

The protein belongs to the IPP transferase family. As to quaternary structure, monomer. Mg(2+) is required as a cofactor.

The catalysed reaction is adenosine(37) in tRNA + dimethylallyl diphosphate = N(6)-dimethylallyladenosine(37) in tRNA + diphosphate. Catalyzes the transfer of a dimethylallyl group onto the adenine at position 37 in tRNAs that read codons beginning with uridine, leading to the formation of N6-(dimethylallyl)adenosine (i(6)A). In Trichlorobacter lovleyi (strain ATCC BAA-1151 / DSM 17278 / SZ) (Geobacter lovleyi), this protein is tRNA dimethylallyltransferase 2.